We begin with the raw amino-acid sequence, 282 residues long: ATP phosphoribosyltransferase (282 aa).

It belongs to the ATP phosphoribosyltransferase family. Long subfamily. Mg(2+) serves as cofactor.

The protein resides in the cytoplasm. It catalyses the reaction 1-(5-phospho-beta-D-ribosyl)-ATP + diphosphate = 5-phospho-alpha-D-ribose 1-diphosphate + ATP. Its pathway is amino-acid biosynthesis; L-histidine biosynthesis; L-histidine from 5-phospho-alpha-D-ribose 1-diphosphate: step 1/9. Its activity is regulated as follows. Feedback inhibited by histidine. Catalyzes the condensation of ATP and 5-phosphoribose 1-diphosphate to form N'-(5'-phosphoribosyl)-ATP (PR-ATP). Has a crucial role in the pathway because the rate of histidine biosynthesis seems to be controlled primarily by regulation of HisG enzymatic activity. This is ATP phosphoribosyltransferase from Pyrobaculum neutrophilum (strain DSM 2338 / JCM 9278 / NBRC 100436 / V24Sta) (Thermoproteus neutrophilus).